The following is a 318-amino-acid chain: Olfactory receptor 5M5 (318 aa).

Residues 1–31 are Extracellular-facing; that stretch reads MLAPKKMVRGNYSMVTEFILLGLTDRPELQP. A glycan (N-linked (GlcNAc...) asparagine) is linked at Asn-11. A helical transmembrane segment spans residues 32-52; that stretch reads LLFVLFLVIYLITVGGNLGMM. At 53 to 60 the chain is on the cytoplasmic side; the sequence is VLIRIDSR. Residues 61 to 81 form a helical membrane-spanning segment; the sequence is LHTPMYYFLASLSCLDLCYST. Topologically, residues 82–105 are extracellular; it reads NVTPKMLVNFLSEKKTISYAACLV. Cys-103 and Cys-195 are oxidised to a cystine. A helical membrane pass occupies residues 106 to 126; it reads QCYFFIAMVITEYYMLAVMAY. Over 127-139 the chain is Cytoplasmic; the sequence is DRYMAICNPLLYS. Residues 140 to 160 traverse the membrane as a helical segment; the sequence is SKMSKGVCVRLIAGPYIYGFL. Residues 161–202 are Extracellular-facing; that stretch reads SGLMETMWTYRLTFCGSNIINHFYCADPPLIRLSCSDTFIKE. A helical transmembrane segment spans residues 203–223; it reads TSMFVVAGFNLSNSLFIILIS. Topologically, residues 224–243 are cytoplasmic; sequence YLFILIAILRMRSAEGRRKA. The helical transmembrane segment at 244–264 threads the bilayer; that stretch reads FSTCGSHLVAVTVFYGTLFCM. The Extracellular segment spans residues 265-277; that stretch reads YVRPPTDKSVEQS. A helical membrane pass occupies residues 278–298; it reads KIIAVFYTFVSPMLNPIIYSL. Residues 299–318 lie on the Cytoplasmic side of the membrane; sequence RNKDVKHAFWKLVRRNVLSK.

Belongs to the G-protein coupled receptor 1 family.

The protein localises to the cell membrane. Functionally, potential odorant receptor. This is Olfactory receptor 5M5 from Mus musculus (Mouse).